Consider the following 400-residue polypeptide: Centrosomal protein CEP57L1 (400 aa).

At serine 45 the chain carries Phosphoserine. Coiled-coil stretches lie at residues 47–111 (NNQA…KKDI) and 138–213 (NVER…QDRA). Disordered stretches follow at residues 222-261 (REPPQQRDHKFRTPTFERKKPFRTTSQARANPQSSGEPVS) and 314-400 (MESK…KWEQ). Residues 244 to 258 (RTTSQARANPQSSGE) show a composition bias toward polar residues. A coiled-coil region spans residues 261-345 (SICDSLSELL…EKIENSRINE (85 aa)). Basic and acidic residues-rich tracts occupy residues 314-342 (MESKGDQISKLKKHQDSVRKLQEKIENSR) and 391-400 (LRRDDIKWEQ).

Belongs to the translokin family.

Its subcellular location is the cytoplasm. It localises to the cytoskeleton. The protein localises to the microtubule organizing center. The protein resides in the centrosome. In terms of biological role, centrosomal protein which may be required for microtubule attachment to centrosomes. In Mus musculus (Mouse), this protein is Centrosomal protein CEP57L1 (Cep57l1).